The primary structure comprises 958 residues: Importin-13 (958 aa).

HEAT repeat units follow at residues 19-49 (ENVEKALHQLYYDPNIENKNLAQKWLMQAQV), 51-83 (PQAWHFSWLLLNMDKVPEIQYSAPAPCTSRSPA), 90-130 (PDQY…LSMM), 137-174 (AVADMVRMFQAEDSNVDGRARCLALLELLTVLPEEFQT), 189-226 (LAQECGSVFPLLEQLLQQQDSPGFIKQKVLKCFSSWVQ), 231-263 (LMDCENLIQAAFTSLQDPELFDTAVEAVVNAIS), 271-320 (VNTL…ALLD), 325-367 (WQSF…DDIL), 370-433 (EPDK…YEML), 435-471 (AELLSSLYDKLGRLLTNTEQPSTWQHTEALLYGFQSI), 482-517 (VVPGLIGLIPRISISNVQLADTVMFTIGALSEWLAD), 519-553 (PVMINNVLPLVLQALGNPELSISSVSTLKKICREC), 557-595 (LPPYAANIVAVSQEVLMKQIHKTSQCMWLMQALGFLLSA), 598-643 (VEEI…SNLF), 671-711 (PVVV…VKTL), 715-749 (FAPMVPQLCEMLGQMYSTIPQASAIDLTRQLVHIF), 756-798 (FPPI…ALKR), 810-840 (VKALFHCGVLSLKFPEAPTVKASCGFFTELL), 855-888 (ENGKVLLQAVLEGVGGQASRSLMDHFAEILFALN), and 892-926 (FSYLSIWIKEAMQQDGFPSARVSPEQKETFSQQIL). The region spanning 40-106 (AQKWLMQAQV…KSQLFTHITR (67 aa)) is the Importin N-terminal domain.

This sequence belongs to the importin beta family.

The protein localises to the cytoplasm. It localises to the nucleus. Its function is as follows. Functions in nuclear protein import as nuclear transport receptor. Serves as receptor for nuclear localization signals (NLS) in cargo substrates. Is thought to mediate docking of the importin/substrate complex to the nuclear pore complex (NPC) through binding to nucleoporin and the complex is subsequently translocated through the pore by an energy requiring, Ran-dependent mechanism. At the nucleoplasmic side of the NPC, Ran binds to the importin, the importin/substrate complex dissociates and importin is re-exported from the nucleus to the cytoplasm where GTP hydrolysis releases Ran. The directionality of nuclear import is thought to be conferred by an asymmetric distribution of the GTP- and GDP-bound forms of Ran between the cytoplasm and nucleus. The protein is Importin-13 (IPO13) of Gallus gallus (Chicken).